A 325-amino-acid polypeptide reads, in one-letter code: Hydroxymethylglutaryl-CoA lyase, mitochondrial (325 aa).

Residues 1 to 27 (MASVRKAFPRRLVGLTSLRAVSTSSMG) constitute a mitochondrion transit peptide. One can recognise a Pyruvate carboxyltransferase domain in the interval 33 to 300 (VKIVEVGPRD…HTGVNLQKLL (268 aa)). Arg41 lines the substrate pocket. Asp42 is a binding site for a divalent metal cation. The residue at position 48 (Lys48) is an N6-acetyllysine; alternate. At Lys48 the chain carries N6-succinyllysine; alternate. Lys111 is subject to N6-acetyllysine. N6-acetyllysine; alternate occurs at positions 137 and 179. An N6-succinyllysine; alternate mark is found at Lys137 and Lys179. A divalent metal cation is bound by residues His233 and His235. Cys266 is a catalytic residue. Residue Asn275 coordinates a divalent metal cation. Residues 323–325 (CKL) carry the Microbody targeting signal motif. An N6-acetyllysine modification is found at Lys324.

The protein belongs to the HMG-CoA lyase family. As to quaternary structure, homodimer; disulfide-linked. Can also form homotetramers.

Its subcellular location is the mitochondrion matrix. It localises to the peroxisome. The catalysed reaction is (3S)-3-hydroxy-3-methylglutaryl-CoA = acetoacetate + acetyl-CoA. Its pathway is metabolic intermediate metabolism; (S)-3-hydroxy-3-methylglutaryl-CoA degradation; acetoacetate from (S)-3-hydroxy-3-methylglutaryl-CoA: step 1/1. Its function is as follows. Mitochondrial 3-hydroxy-3-methylglutaryl-CoA lyase that catalyzes a cation-dependent cleavage of (S)-3-hydroxy-3-methylglutaryl-CoA into acetyl-CoA and acetoacetate, a key step in ketogenesis. Terminal step in leucine catabolism. Ketone bodies (beta-hydroxybutyrate, acetoacetate and acetone) are essential as an alternative source of energy to glucose, as lipid precursors and as regulators of metabolism. The protein is Hydroxymethylglutaryl-CoA lyase, mitochondrial (Hmgcl) of Mus musculus (Mouse).